A 734-amino-acid chain; its full sequence is Photosystem I P700 chlorophyll a apoprotein A2 (734 aa).

Transmembrane regions (helical) follow at residues 46-69, 135-158, 175-199, 273-291, 330-353, 369-395, 417-439, and 517-535; these read IFAS…FHVA, LYTG…LHLQ, LNHH…HVAI, IAHH…GHMY, LHFQ…QHMY, AALY…IFFI, AIIS…LYVH, and FLVH…LILV. Residues Cys-559 and Cys-568 each coordinate [4Fe-4S] cluster. 2 helical membrane passes run 575-596 and 643-665; these read AFYL…YWHW and LSVW…MFLI. 3 residues coordinate chlorophyll a: His-654, Met-662, and Tyr-670. Trp-671 lines the phylloquinone pocket. Residues 707 to 727 traverse the membrane as a helical segment; it reads LVGLVHFSVGYIFTYAAFLIA.

This sequence belongs to the PsaA/PsaB family. As to quaternary structure, the PsaA/B heterodimer binds the P700 chlorophyll special pair and subsequent electron acceptors. PSI consists of a core antenna complex that captures photons, and an electron transfer chain that converts photonic excitation into a charge separation. The eukaryotic PSI reaction center is composed of at least 11 subunits. Requires P700 is a chlorophyll a/chlorophyll a' dimer, A0 is one or more chlorophyll a, A1 is one or both phylloquinones and FX is a shared 4Fe-4S iron-sulfur center. as cofactor.

It localises to the plastid. The protein localises to the chloroplast thylakoid membrane. The enzyme catalyses reduced [plastocyanin] + hnu + oxidized [2Fe-2S]-[ferredoxin] = oxidized [plastocyanin] + reduced [2Fe-2S]-[ferredoxin]. In terms of biological role, psaA and PsaB bind P700, the primary electron donor of photosystem I (PSI), as well as the electron acceptors A0, A1 and FX. PSI is a plastocyanin-ferredoxin oxidoreductase, converting photonic excitation into a charge separation, which transfers an electron from the donor P700 chlorophyll pair to the spectroscopically characterized acceptors A0, A1, FX, FA and FB in turn. Oxidized P700 is reduced on the lumenal side of the thylakoid membrane by plastocyanin. In Nicotiana tomentosiformis (Tobacco), this protein is Photosystem I P700 chlorophyll a apoprotein A2.